The primary structure comprises 162 residues: Regulatory protein RecX (162 aa).

It belongs to the RecX family.

It is found in the cytoplasm. Modulates RecA activity. This is Regulatory protein RecX from Xanthomonas oryzae pv. oryzae (strain PXO99A).